Here is a 110-residue protein sequence, read N- to C-terminus: MSLEKTTRMNYLFDFYQSLLTSKQKSYMSLYYLDDFSLGEIAEEYDVSRQAVYDNIKRTEAMLEQYEEKLLLFKKFQERKEMFTKLKELASGLQEEEKMTALIEALEKLD.

Belongs to the UPF0122 family.

In terms of biological role, might take part in the signal recognition particle (SRP) pathway. This is inferred from the conservation of its genetic proximity to ftsY/ffh. May be a regulatory protein. The polypeptide is UPF0122 protein RBAM_015800 (Bacillus velezensis (strain DSM 23117 / BGSC 10A6 / LMG 26770 / FZB42) (Bacillus amyloliquefaciens subsp. plantarum)).